We begin with the raw amino-acid sequence, 358 residues long: Feruloyl CoA ortho-hydroxylase F6H1-2 (358 aa).

Residues 200–308 enclose the Fe2OG dioxygenase domain; it reads TKESLLMGSK…RISVPIFVNP (109 aa). Residue Tyr216 participates in 2-oxoglutarate binding. The Fe cation site is built by His231, Asp233, and His289. Residues Arg299 and Ser301 each coordinate 2-oxoglutarate.

This sequence belongs to the iron/ascorbate-dependent oxidoreductase family. It depends on L-ascorbate as a cofactor. Fe(2+) is required as a cofactor. Expressed at low levels in tubers, underground stems, leaves and petioles.

The enzyme catalyses (E)-feruloyl-CoA + 2-oxoglutarate + O2 = (E)-6-hydroxyferuloyl-CoA + succinate + CO2. The protein operates within phenylpropanoid metabolism. In terms of biological role, 2-oxoglutarate (OG)- and Fe(II)-dependent dioxygenase (2OGD) involved in scopoletin biosynthesis. Converts feruloyl CoA into 6'-hydroxyferuloyl CoA, and, at low efficiency, caffeoyl-CoA into 6'-hydroxycaffeate, but has no activity with p-coumaroyl-CoA. The sequence is that of Feruloyl CoA ortho-hydroxylase F6H1-2 from Ipomoea batatas (Sweet potato).